Here is a 582-residue protein sequence, read N- to C-terminus: 2-(3-amino-3-carboxypropyl)histidine synthase subunit 2 (582 aa).

[4Fe-4S] cluster is bound by residues C145, C166, and C398.

Belongs to the DPH1/DPH2 family. DPH2 subfamily. As to quaternary structure, component of the 2-(3-amino-3-carboxypropyl)histidine synthase complex composed of DPH1, DPH2, DPH3 and a NADH-dependent reductase, predominantly CBR1. The cofactor is [4Fe-4S] cluster.

The protein resides in the cytoplasm. It functions in the pathway protein modification; peptidyl-diphthamide biosynthesis. Functionally, required for the first step of diphthamide biosynthesis, a post-translational modification of histidine which occurs in elongation factor 2. DPH1 and DPH2 transfer a 3-amino-3-carboxypropyl (ACP) group from S-adenosyl-L-methionine (SAM) to a histidine residue, the reaction is assisted by a reduction system comprising DPH3 and a NADH-dependent reductase, predominantly CBR1. Facilitates the reduction of the catalytic iron-sulfur cluster found in the DPH1 subunit. This Eremothecium gossypii (strain ATCC 10895 / CBS 109.51 / FGSC 9923 / NRRL Y-1056) (Yeast) protein is 2-(3-amino-3-carboxypropyl)histidine synthase subunit 2 (DPH2).